A 427-amino-acid chain; its full sequence is Glutamate-1-semialdehyde 2,1-aminomutase (427 aa).

Lysine 265 is modified (N6-(pyridoxal phosphate)lysine).

Belongs to the class-III pyridoxal-phosphate-dependent aminotransferase family. HemL subfamily. As to quaternary structure, homodimer. The cofactor is pyridoxal 5'-phosphate.

It is found in the cytoplasm. It carries out the reaction (S)-4-amino-5-oxopentanoate = 5-aminolevulinate. Its pathway is porphyrin-containing compound metabolism; protoporphyrin-IX biosynthesis; 5-aminolevulinate from L-glutamyl-tRNA(Glu): step 2/2. The sequence is that of Glutamate-1-semialdehyde 2,1-aminomutase from Burkholderia ambifaria (strain ATCC BAA-244 / DSM 16087 / CCUG 44356 / LMG 19182 / AMMD) (Burkholderia cepacia (strain AMMD)).